A 322-amino-acid polypeptide reads, in one-letter code: Tlg2p-like protein a (322 aa).

Topologically, residues 1 to 301 (MATRNRTLLF…QRHGGMVKCA (301 aa)) are cytoplasmic. A coiled-coil region spans residues 116 to 146 (KEDQHNIESLTQEITFLLKKSEKQLQRLSAS). A t-SNARE coiled-coil homology domain is found at 226 to 288 (EEVSVEREKE…EDGLKQLQKA (63 aa)). Residues 302-322 (SVLVILCFIMLLLLILKEIFL) traverse the membrane as a helical; Anchor for type IV membrane protein segment.

Belongs to the syntaxin family. As to quaternary structure, interacts with VTI12 and SYP61 to form a t-SNARE complex and with VPS45. Interacts with TNO1. Binds to YKT61 and YKT62. Core constituent of the SNARE complex required for membrane fusion at the trans-Golgi network. Mostly expressed in flowers, to a lower extent in leaves and roots, and, at low levels, in stems.

Its subcellular location is the golgi apparatus. The protein resides in the trans-Golgi network membrane. In terms of biological role, contributes to the regulation of secretory and vacuolar transport pathways in the post-Golgi network, and to the maintenance of the Golgi apparatus and trans-Golgi network (TGN) morphologies. Together with VTI12, required for membrane fusion. Vesicle trafficking protein that functions in the secretory pathway and mediates liposome fusion; the fusion of phospholipid vesicles containing SYP41 and VTI12 is triggered by YKT61 and YKT62. Required for extracellular resistance responses to a fungal pathogen. Also involved in the protection of chloroplasts from salicylic acid-dependent biotic stress. The sequence is that of Tlg2p-like protein a from Arabidopsis thaliana (Mouse-ear cress).